A 232-amino-acid chain; its full sequence is Probable proteasome subunit alpha type-3 (232 aa).

Belongs to the peptidase T1A family. The 26S proteasome consists of a 20S proteasome core and two 19S regulatory subunits. The 20S proteasome core is composed of 28 subunits that are arranged in four stacked rings, resulting in a barrel-shaped structure. The two end rings are each formed by seven alpha subunits, and the two central rings are each formed by seven beta subunits. The catalytic chamber with the active sites is on the inside of the barrel.

It is found in the cytoplasm. The protein localises to the nucleus. Functionally, the proteasome degrades poly-ubiquitinated proteins in the cytoplasm and in the nucleus. It is essential for the regulated turnover of proteins and for the removal of misfolded proteins. The proteasome is a multicatalytic proteinase complex that is characterized by its ability to cleave peptides with Arg, Phe, Tyr, Leu, and Glu adjacent to the leaving group at neutral or slightly basic pH. It has an ATP-dependent proteolytic activity. The chain is Probable proteasome subunit alpha type-3 (PRE9) from Encephalitozoon cuniculi (strain GB-M1) (Microsporidian parasite).